The chain runs to 92 residues: Small ribosomal subunit protein uS19c (92 aa).

This sequence belongs to the universal ribosomal protein uS19 family.

It localises to the plastid. Its subcellular location is the chloroplast. In terms of biological role, protein S19 forms a complex with S13 that binds strongly to the 16S ribosomal RNA. In Phaeodactylum tricornutum (strain CCAP 1055/1), this protein is Small ribosomal subunit protein uS19c.